The sequence spans 101 residues: Small ribosomal subunit protein uS14m (101 aa).

The protein belongs to the universal ribosomal protein uS14 family. As to quaternary structure, component of the mitochondrial ribosome small subunit (28S) which comprises a 12S rRNA and about 30 distinct proteins. Interacts with LIAT1.

It is found in the mitochondrion. The polypeptide is Small ribosomal subunit protein uS14m (mrps14) (Dictyostelium discoideum (Social amoeba)).